The sequence spans 111 residues: Nucleoid-associated protein Ppha_1174 (111 aa).

The protein belongs to the YbaB/EbfC family. In terms of assembly, homodimer.

It is found in the cytoplasm. The protein resides in the nucleoid. Functionally, binds to DNA and alters its conformation. May be involved in regulation of gene expression, nucleoid organization and DNA protection. This chain is Nucleoid-associated protein Ppha_1174, found in Pelodictyon phaeoclathratiforme (strain DSM 5477 / BU-1).